We begin with the raw amino-acid sequence, 159 residues long: Eukaryotic translation initiation factor 5A (159 aa).

Lys51 is subject to Hypusine.

The protein belongs to the eIF-5A family. Post-translationally, lys-51 undergoes hypusination, a unique post-translational modification that consists in the addition of a butylamino group from spermidine to lysine side chain, leading to the formation of the unusual amino acid hypusine. eIF-5As are the only known proteins to undergo this modification, which is essential for their function.

The protein localises to the cytoplasm. Translation factor that promotes translation elongation and termination, particularly upon ribosome stalling at specific amino acid sequence contexts. Binds between the exit (E) and peptidyl (P) site of the ribosome and promotes rescue of stalled ribosome: specifically required for efficient translation of polyproline-containing peptides as well as other motifs that stall the ribosome. Acts as a ribosome quality control (RQC) cofactor by joining the RQC complex to facilitate peptidyl transfer during CAT tailing step. Functions as a regulator of autophagy. The sequence is that of Eukaryotic translation initiation factor 5A from Drosophila melanogaster (Fruit fly).